The primary structure comprises 967 residues: MRATFHLFTFIFLLLFSSVICISTPGFRNDHESIGDDEEKTSSTILVSTIDGRLRALDSETGEIKWTLQEEPVLRSPSAVKQGFTFLPNPLDGSLYVLKNSSLKKLPFNIPQLVHASPCKGNDGILYAGSKKDVWFGIDPKTGLKVETLSSASADRICPANQKQTIFLGRTEYRVSMFDEKNRGKTWNATFNDYSAHLLPEVNTWPFKHYASSSHGYILTFDRETGEMRWEQDLKQPVVALYLLRDDGLHKLPFEVMGKETMENVAKNIFTVDQWPTVLGVNAADPQTTSLTNQFFPALFVGESSFGLYAIEALVDHQTITYSPKLLGPPLLEGPAPIALTEMEKEEYLPPRRPIIRNIPPSITHKTSDGEYLLLGYHDRPMMTMATIIPTRYPVPGPHKAIGSTIERPPPQLLGPVEPQKHEDTSFILLLLNNHPIPFYATLVTMFALLLTVIWQCGRQWDQQKSTSRMDSFEIVNNPGESRSAQTSKQSNRGSFGWANRKIEIPEGWMAVGSKLMYSPSDILGTGCEGTVVYRGTFDGREVAVKRVVSEFVKFAHREADLLRESDTHPHVIRYFCMESDSQFRYLALELCIASLNDYVEQKEVQQNVTIALRDIMKQATDGLAHLHASKIVHRDMKPQNVLITMASQRGEMRAVISDFGLCKRVQPGKNSISRGIASGLAGTDGWIAPEVLISASTSYPVDIFSLGCIFYYVLTSGTHPFGKSLHRQANIVNGEYTLNKLADLDDWSLADDLISSMLNVEPLHRLTADAVLNHPFFWTSEKRLAYFSDVSDRVEKEEDNSPVVRRIETDARIVVCGGWREKICDALKEDLRKFRTYKSFSVRDLLRAMRNKKHHYRELPEDVRQSLGDIPDQFLHYFTSRFPRLLLHVYKATEYCSGEAVFKRYYSDDVRARMYPIVEEEERVRKKIKEEMANEVWARAPKPVEQRTPLKLDKRNIKKKSNPNTD.

The N-terminal stretch at 1–21 (MRATFHLFTFIFLLLFSSVIC) is a signal peptide. Topologically, residues 22–438 (ISTPGFRNDH…LLLLNNHPIP (417 aa)) are lumenal. N-linked (GlcNAc...) asparagine glycosylation is found at Asn-100 and Asn-188. A helical membrane pass occupies residues 439–455 (FYATLVTMFALLLTVIW). At 456–967 (QCGRQWDQQK…IKKKSNPNTD (512 aa)) the chain is on the cytoplasmic side. The disordered stretch occupies residues 474-494 (EIVNNPGESRSAQTSKQSNRG). Residues 479–494 (PGESRSAQTSKQSNRG) show a composition bias toward polar residues. In terms of domain architecture, Protein kinase spans 518–778 (YSPSDILGTG…ADAVLNHPFF (261 aa)). Residues 524 to 532 (LGTGCEGTV) and Lys-546 contribute to the ATP site. The Proton acceptor role is filled by Asp-636. The residue at position 672 (Ser-672) is a Phosphoserine; by autocatalysis. Positions 781–909 (SEKRLAYFSD…EAVFKRYYSD (129 aa)) constitute a KEN domain. The tract at residues 948–967 (RTPLKLDKRNIKKKSNPNTD) is disordered. Residues 957 to 967 (NIKKKSNPNTD) are compositionally biased toward basic residues.

The protein belongs to the protein kinase superfamily. Ser/Thr protein kinase family. Requires Mg(2+) as cofactor. In terms of processing, autophosphorylated mainly on serine residues.

The protein localises to the endoplasmic reticulum membrane. It carries out the reaction L-seryl-[protein] + ATP = O-phospho-L-seryl-[protein] + ADP + H(+). The catalysed reaction is L-threonyl-[protein] + ATP = O-phospho-L-threonyl-[protein] + ADP + H(+). Its activity is regulated as follows. The kinase domain is activated by trans-autophosphorylation. Kinase activity is required for activation of the endoribonuclease domain. Senses unfolded proteins in the lumen of the endoplasmic reticulum via its N-terminal domain which leads to enzyme auto-activation. The active endoribonuclease domain splices xbp-1 precursor mRNA to produce the mature form which then induces transcription of UPR target genes. Unfolded protein response (UPR) transcriptional activation by ire-1, as well as translational attenuation by pek-1 in a complementary pathway, maintains ER homeostasis. Regulates the transcriptional up-regulation of nucleoside-diphosphatase apy-1 and many other genes, upon ER stress. By activating the UPR pathway during non-lethal hypoxia pre-conditioning, confers adaptive protection to subsequent exposure to hypoxia. ire-1 and pek-1 are redundant genes that control a pathway essential for larval development and survival. Plays a role in the nuclear retention of unspliced mRNAs. The polypeptide is Serine/threonine-protein kinase/endoribonuclease ire-1 (Caenorhabditis elegans).